The sequence spans 499 residues: Glutamate--tRNA ligase (499 aa).

Residues 12-22 carry the 'HIGH' region motif; it reads PSPTGHLHIGN. The 'KMSKS' region motif lies at 259–263; the sequence is KLSKR. Residue lysine 262 coordinates ATP.

It belongs to the class-I aminoacyl-tRNA synthetase family. Glutamate--tRNA ligase type 1 subfamily. As to quaternary structure, monomer.

The protein resides in the cytoplasm. The enzyme catalyses tRNA(Glu) + L-glutamate + ATP = L-glutamyl-tRNA(Glu) + AMP + diphosphate. In terms of biological role, catalyzes the attachment of glutamate to tRNA(Glu) in a two-step reaction: glutamate is first activated by ATP to form Glu-AMP and then transferred to the acceptor end of tRNA(Glu). This chain is Glutamate--tRNA ligase, found in Lactobacillus acidophilus (strain ATCC 700396 / NCK56 / N2 / NCFM).